We begin with the raw amino-acid sequence, 38 residues long: Large ribosomal subunit protein bL36 (38 aa).

It belongs to the bacterial ribosomal protein bL36 family.

This chain is Large ribosomal subunit protein bL36, found in Gemmatimonas aurantiaca (strain DSM 14586 / JCM 11422 / NBRC 100505 / T-27).